The chain runs to 123 residues: Small ribosomal subunit protein uS12c (123 aa).

It belongs to the universal ribosomal protein uS12 family. Part of the 30S ribosomal subunit.

The protein localises to the plastid. The protein resides in the chloroplast. Functionally, with S4 and S5 plays an important role in translational accuracy. Located at the interface of the 30S and 50S subunits. This chain is Small ribosomal subunit protein uS12c (rps12), found in Chlorella vulgaris (Green alga).